Consider the following 90-residue polypeptide: MNKTQLIDVIAEKAELSKTQAKAALESTLAAITESLKEGDAVQLVGFGTFKVNHRAERTGRNPQTGKEIKIAAANVPAFVSGKALKDAVK.

This sequence belongs to the bacterial histone-like protein family. As to quaternary structure, heterodimer of an alpha and a beta chain.

Histone-like DNA-binding protein which is capable of wrapping DNA to stabilize it, and thus to prevent its denaturation under extreme environmental conditions. This chain is DNA-binding protein HU-alpha (hupA), found in Escherichia coli O157:H7.